A 92-amino-acid chain; its full sequence is N(2)-fixation sustaining protein CowN (92 aa).

Belongs to the CowN family.

Is required to sustain N(2)-dependent growth in the presence of low levels of carbon monoxide (CO). Probably acts by protecting the N(2) fixation ability of the nitrogenase complex, which is inactivated in the presence of CO. The chain is N(2)-fixation sustaining protein CowN from Cereibacter sphaeroides (strain KD131 / KCTC 12085) (Rhodobacter sphaeroides).